Consider the following 384-residue polypeptide: Protein RecA (384 aa).

G76–T83 serves as a coordination point for ATP. The interval Q346–K365 is disordered. Residues E350–K365 show a composition bias toward basic and acidic residues.

The protein belongs to the RecA family.

The protein resides in the cytoplasm. Functionally, can catalyze the hydrolysis of ATP in the presence of single-stranded DNA, the ATP-dependent uptake of single-stranded DNA by duplex DNA, and the ATP-dependent hybridization of homologous single-stranded DNAs. It interacts with LexA causing its activation and leading to its autocatalytic cleavage. The protein is Protein RecA of Polaromonas naphthalenivorans (strain CJ2).